Consider the following 249-residue polypeptide: Cytokine-inducible SH2-containing protein (249 aa).

Positions 41 to 64 (AFPEEPAPTFAAPEPDGSAPQTRD) are disordered. Positions 84-165 (WYWGSITASE…PDVVSLIQHY (82 aa)) constitute an SH2 domain. The region spanning 200-248 (KLLRPLGRRDSIPSLQHLCRLRINRCTTEVERLPLPRRMGDYLKQYPFQ) is the SOCS box domain.

It participates in protein modification; protein ubiquitination. In terms of biological role, SOCS family proteins form part of a classical negative feedback system that regulates cytokine signal transduction. CIS is involved in the negative regulation of cytokines that signal through the JAK-STAT5 pathway such as erythropoietin, prolactin and interleukin 3 (IL3) receptor. Inhibits STAT5 trans-activation by suppressing its tyrosine phosphorylation. May be a substrate-recognition component of a SCF-like ECS (Elongin BC-CUL2/5-SOCS-box protein) E3 ubiquitin-protein ligase complex which mediates the ubiquitination and subsequent proteasomal degradation of target proteins. The sequence is that of Cytokine-inducible SH2-containing protein (CISH) from Gallus gallus (Chicken).